Reading from the N-terminus, the 493-residue chain is MPESRTVALVTLGCARNEVDSEELAGRLEADGWKLVDDAEEADVAVVNTCGFVEAAKKDSVDALLEANDLKGHGRTQAVVAVGCMAERYGKELADALPEADGVLGFDDYADISDRLQTILNGGIHAAHTPRDRRKLLPISPAERQEAGAAVALPGHGPTDLPEGVAPASGPRAPLRRRLDGSPVASVKLASGCDRRCSFCAIPSFRGSFISRRPSDVLNETRWLAEQGVKEIMLVSENNTSYGKDLGDIRLLESLLPNLAEVDGIERVRVSYLQPAEMRPGLIDVLTSTEKVAPYFDLSFQHSAPNVLRAMRRFGDTDRFLELLDTIRSKAPEAGVRSNFIVGFPGESEADLAELERFLNHARLDAIGVFGYSDEEGTEAATYGDKLDEDVVAERLARVSRLAEELVSQRADERVGATVRVLVESVDPAGEGDGVRGRAEHQAPETDGQVLLTSGAGLSVGRMVDAKVVGTEGVDLVAEPLLGSPEWSEEAGR.

The MTTase N-terminal domain occupies 5 to 121 (RTVALVTLGC…ISDRLQTILN (117 aa)). [4Fe-4S] cluster contacts are provided by Cys14, Cys50, and Cys84. Residues 153–177 (LPGHGPTDLPEGVAPASGPRAPLRR) form a disordered region. The 232-residue stretch at 179–410 (LDGSPVASVK…RLAEELVSQR (232 aa)) folds into the Radical SAM core domain. Positions 193, 197, and 200 each coordinate [4Fe-4S] cluster. Residues 412-482 (DERVGATVRV…GVDLVAEPLL (71 aa)) form the TRAM domain.

Belongs to the methylthiotransferase family. RimO subfamily. [4Fe-4S] cluster serves as cofactor.

It is found in the cytoplasm. It carries out the reaction L-aspartate(89)-[ribosomal protein uS12]-hydrogen + (sulfur carrier)-SH + AH2 + 2 S-adenosyl-L-methionine = 3-methylsulfanyl-L-aspartate(89)-[ribosomal protein uS12]-hydrogen + (sulfur carrier)-H + 5'-deoxyadenosine + L-methionine + A + S-adenosyl-L-homocysteine + 2 H(+). Catalyzes the methylthiolation of an aspartic acid residue of ribosomal protein uS12. This Streptomyces coelicolor (strain ATCC BAA-471 / A3(2) / M145) protein is Ribosomal protein uS12 methylthiotransferase RimO.